Consider the following 348-residue polypeptide: VIP36-like protein (348 aa).

Residues M1–A44 form the signal peptide. Over G45–A313 the chain is Lumenal. The L-type lectin-like domain occupies E49–L274. The a carbohydrate site is built by S93 and D128. The Ca(2+) site is built by D159, Y161, and N163. Residue Y161–N163 participates in a carbohydrate binding. N181 carries N-linked (GlcNAc...) (high mannose) asparagine glycosylation. H188 lines the a carbohydrate pocket. D191 is a binding site for Ca(2+). A disulfide bond links C200 and C237. G258–L260 lines the a carbohydrate pocket. A helical transmembrane segment spans residues L314–Y336. Topologically, residues N337–Y348 are cytoplasmic. The Endoplasmic reticulum retention signal motif lies at R344 to R346.

Expressed in numerous tissues. Highest expression in skeletal muscle and kidney, intermediate levels in heart, liver and placenta, low levels in brain, thymus, spleen, small intestine and lung.

Its subcellular location is the endoplasmic reticulum membrane. It is found in the golgi apparatus membrane. In terms of biological role, may be involved in the regulation of export from the endoplasmic reticulum of a subset of glycoproteins. May function as a regulator of ERGIC-53. This chain is VIP36-like protein (LMAN2L), found in Homo sapiens (Human).